A 227-amino-acid polypeptide reads, in one-letter code: DHVGSYGIVVYQSPGDIGQYTFEFDGDELFYVDLDKKETIWMLPEFAQLRSFDPQGGLQNIATGKHNLGVLTKRSNSTPATNEAPQATVFPKSPVLLGQPNTLICFVDNIFPPVINITWLRNSKSVADGVYETSFFVNRDYSFHKLSYLTFIPSDDDIYDCKVEHWGLEEPVLKHWEPEIPAPMSELTETVVCALGLSVGLVGIVVGTIFIIQGLRSGGTSRHPGPL.

The interval 1–82 (DHVGSYGIVV…KRSNSTPATN (82 aa)) is alpha-1. Residues 1–189 (DHVGSYGIVV…IPAPMSELTE (189 aa)) lie on the Extracellular side of the membrane. The interval 83–176 (EAPQATVFPK…GLEEPVLKHW (94 aa)) is alpha-2. The 93-residue stretch at 85-177 (PQATVFPKSP…LEEPVLKHWE (93 aa)) folds into the Ig-like C1-type domain. A disulfide bond links C105 and C161. N-linked (GlcNAc...) asparagine glycosylation occurs at N116. The connecting peptide stretch occupies residues 177-189 (EPEIPAPMSELTE). A helical transmembrane segment spans residues 190–215 (TVVCALGLSVGLVGIVVGTIFIIQGL). Topologically, residues 216 to 227 (RSGGTSRHPGPL) are cytoplasmic.

Belongs to the MHC class II family.

It is found in the membrane. The chain is H-2 class II histocompatibility antigen, A-U alpha chain (H2-Aa) from Mus musculus (Mouse).